Here is a 567-residue protein sequence, read N- to C-terminus: DNA ligase (567 aa).

Position 260 (E260) interacts with ATP. The active-site N6-AMP-lysine intermediate is K262. R267, R282, E312, F352, R427, and K433 together coordinate ATP.

It belongs to the ATP-dependent DNA ligase family. Mg(2+) serves as cofactor.

The catalysed reaction is ATP + (deoxyribonucleotide)n-3'-hydroxyl + 5'-phospho-(deoxyribonucleotide)m = (deoxyribonucleotide)n+m + AMP + diphosphate.. In terms of biological role, DNA ligase that seals nicks in double-stranded DNA during DNA replication, DNA recombination and DNA repair. The protein is DNA ligase of Methanococcoides burtonii (strain DSM 6242 / NBRC 107633 / OCM 468 / ACE-M).